The primary structure comprises 83 residues: Cytochrome b559 subunit alpha (83 aa).

Residues 22–36 form a helical membrane-spanning segment; it reads VIHSITIPALFIAGW. Histidine 24 lines the heme pocket.

It belongs to the PsbE/PsbF family. Heterodimer of an alpha subunit and a beta subunit. PSII is composed of 1 copy each of membrane proteins PsbA, PsbB, PsbC, PsbD, PsbE, PsbF, PsbH, PsbI, PsbJ, PsbK, PsbL, PsbM, PsbT, PsbX, PsbY, PsbZ, Psb30/Ycf12, peripheral proteins PsbO, CyanoQ (PsbQ), PsbU, PsbV and a large number of cofactors. It forms dimeric complexes. The cofactor is heme b.

The protein localises to the cellular thylakoid membrane. In terms of biological role, this b-type cytochrome is tightly associated with the reaction center of photosystem II (PSII). PSII is a light-driven water:plastoquinone oxidoreductase that uses light energy to abstract electrons from H(2)O, generating O(2) and a proton gradient subsequently used for ATP formation. It consists of a core antenna complex that captures photons, and an electron transfer chain that converts photonic excitation into a charge separation. This chain is Cytochrome b559 subunit alpha, found in Synechococcus elongatus (strain ATCC 33912 / PCC 7942 / FACHB-805) (Anacystis nidulans R2).